The following is a 315-amino-acid chain: Ribosomal protein L11 methyltransferase (315 aa).

Residues threonine 162, glycine 183, aspartate 205, and asparagine 248 each contribute to the S-adenosyl-L-methionine site.

The protein belongs to the methyltransferase superfamily. PrmA family.

Its subcellular location is the cytoplasm. The catalysed reaction is L-lysyl-[protein] + 3 S-adenosyl-L-methionine = N(6),N(6),N(6)-trimethyl-L-lysyl-[protein] + 3 S-adenosyl-L-homocysteine + 3 H(+). Its function is as follows. Methylates ribosomal protein L11. In Oceanobacillus iheyensis (strain DSM 14371 / CIP 107618 / JCM 11309 / KCTC 3954 / HTE831), this protein is Ribosomal protein L11 methyltransferase.